A 155-amino-acid polypeptide reads, in one-letter code: Small ribosomal subunit protein uS7 (155 aa).

Belongs to the universal ribosomal protein uS7 family. Part of the 30S ribosomal subunit. Contacts proteins S9 and S11.

One of the primary rRNA binding proteins, it binds directly to 16S rRNA where it nucleates assembly of the head domain of the 30S subunit. Is located at the subunit interface close to the decoding center, probably blocks exit of the E-site tRNA. The polypeptide is Small ribosomal subunit protein uS7 (Chlorobium phaeovibrioides (strain DSM 265 / 1930) (Prosthecochloris vibrioformis (strain DSM 265))).